We begin with the raw amino-acid sequence, 273 residues long: MMKRQFEDVTRIVIKIGTSSLVLPTGKINLEKIDQLAFVISSLMNKGKEVILVSSGAMGFGLDILKMEKRPTNLAKQQAVSSVGQVAMMSLYSQIFAHYQTNVSQILLTRDVVVFPESLANVTNAFESLISLGIVPIVNENDAVSVDEMDHATKFGDNDRLSAVVAGITKADLLIMLSDIDGLFDKNPTIYEDAQLRSHVAVVTQEIIASAGGAGSKFGTGGMLSKIQSAQMVFENKGQMVLMNGANPRDILRVLEGQPLGTWFKQIEEVTHD.

ATP is bound at residue Lys15. Ser55, Asp142, and Asn158 together coordinate substrate. ATP contacts are provided by residues 178–179 (SD) and 220–226 (TGGMLSK).

This sequence belongs to the glutamate 5-kinase family.

The protein localises to the cytoplasm. The catalysed reaction is L-glutamate + ATP = L-glutamyl 5-phosphate + ADP. It participates in amino-acid biosynthesis; L-proline biosynthesis; L-glutamate 5-semialdehyde from L-glutamate: step 1/2. Catalyzes the transfer of a phosphate group to glutamate to form L-glutamate 5-phosphate. In Streptococcus pyogenes serotype M18 (strain MGAS8232), this protein is Glutamate 5-kinase.